Reading from the N-terminus, the 372-residue chain is MARKSQMVEAFGWAARDASGVLSPFKFLRRATGERDVQFKVLYCGICDWDMIVLKDGFGTTTYPVVPGHEIVGVVTEVGSKVQKFKVGDTVGVGTLVGSCRTCKKCKNDLENYCHSYLMADGACYTYGNTVCGDMSTRAYGGYSDIMVVDEYFAIVWPAKNYPLAAGVPLLCGGIVAYSPMRYYGLDEPGMHIGIVGLGGIGRMAVKFAKAFGAKVTVISTSINKKQEALEKFGADSFLFSKDTEEMEAAADTLDGIIDTAPKIHPIAPLIDLLKFEGKLILLGAVEESYELPASPLIVERKMVAGSASGSVKEIQEMMDFAAKHNIVAEIEIIPIDYVNIAIGRIEKGDATDRFVIDIANTLKSGEDVNSS.

Residues cysteine 47, aspartate 50, histidine 69, glutamate 70, cysteine 100, cysteine 103, cysteine 106, cysteine 114, and cysteine 172 each contribute to the Zn(2+) site. NADP(+)-binding positions include 197–202 (GLGGIG), lysine 226, 283–285 (LGA), serine 307, and arginine 354.

This sequence belongs to the zinc-containing alcohol dehydrogenase family. Homodimer. Zn(2+) serves as cofactor. In terms of tissue distribution, mainly expressed in roots.

It carries out the reaction (19E)-cur-19-en-17-al + NADP(+) = norfluorocurarine + NADPH + H(+). The enzyme catalyses 17,18-epoxy-17-hydroxycur-19-ene + NADP(+) = 18-hydroxynorfluorocurarine + NADPH + H(+). The protein operates within alkaloid biosynthesis. In terms of biological role, alcohol dehydrogenase involved in the biosynthesis of curare monoterpene indole alkaloids (MIAs), natural products such as strychnine, a neurotoxic compound used as a pesticide to control rodents, and its pharmacologically active derivatives, including brucine, used to regulate blood pressure. Curare alkaloids act as animal glycine receptor antagonists. Catalyzes the conversion of norfluorocurarine to desoxy Wieland-Gumlich aldehyde, and of 18-OH norfluorocurarine to Wieland-Gumlich aldehyde. The chain is 18-hydroxynorfluorocurarine reductase from Strychnos nux-vomica (Poison nut).